The chain runs to 412 residues: DNA replication and repair protein RecF (412 aa).

Position 30–37 (30–37 (GKNGLGKT)) interacts with ATP.

Belongs to the RecF family.

The protein resides in the cytoplasm. In terms of biological role, the RecF protein is involved in DNA metabolism; it is required for DNA replication and normal SOS inducibility. RecF binds preferentially to single-stranded, linear DNA. It also seems to bind ATP. The sequence is that of DNA replication and repair protein RecF from Bifidobacterium longum subsp. infantis (strain ATCC 15697 / DSM 20088 / JCM 1222 / NCTC 11817 / S12).